Here is a 152-residue protein sequence, read N- to C-terminus: SsrA-binding protein (152 aa).

Belongs to the SmpB family.

The protein localises to the cytoplasm. Required for rescue of stalled ribosomes mediated by trans-translation. Binds to transfer-messenger RNA (tmRNA), required for stable association of tmRNA with ribosomes. tmRNA and SmpB together mimic tRNA shape, replacing the anticodon stem-loop with SmpB. tmRNA is encoded by the ssrA gene; the 2 termini fold to resemble tRNA(Ala) and it encodes a 'tag peptide', a short internal open reading frame. During trans-translation Ala-aminoacylated tmRNA acts like a tRNA, entering the A-site of stalled ribosomes, displacing the stalled mRNA. The ribosome then switches to translate the ORF on the tmRNA; the nascent peptide is terminated with the 'tag peptide' encoded by the tmRNA and targeted for degradation. The ribosome is freed to recommence translation, which seems to be the essential function of trans-translation. The polypeptide is SsrA-binding protein (Rickettsia massiliae (strain Mtu5)).